A 165-amino-acid polypeptide reads, in one-letter code: Xanthine-guanine phosphoribosyltransferase (165 aa).

5-phospho-alpha-D-ribose 1-diphosphate-binding positions include 41 to 42 (RG) and 98 to 106 (DDLTDTGKT). D99 is a Mg(2+) binding site. Guanine contacts are provided by D102 and I145. Xanthine contacts are provided by D102 and I145. GMP contacts are provided by residues 102–106 (DTGKT) and 144–145 (WI).

This sequence belongs to the purine/pyrimidine phosphoribosyltransferase family. XGPT subfamily. Homotetramer. Requires Mg(2+) as cofactor.

It localises to the cell inner membrane. The enzyme catalyses GMP + diphosphate = guanine + 5-phospho-alpha-D-ribose 1-diphosphate. It catalyses the reaction XMP + diphosphate = xanthine + 5-phospho-alpha-D-ribose 1-diphosphate. The catalysed reaction is IMP + diphosphate = hypoxanthine + 5-phospho-alpha-D-ribose 1-diphosphate. The protein operates within purine metabolism; GMP biosynthesis via salvage pathway; GMP from guanine: step 1/1. It functions in the pathway purine metabolism; XMP biosynthesis via salvage pathway; XMP from xanthine: step 1/1. Purine salvage pathway enzyme that catalyzes the transfer of the ribosyl-5-phosphate group from 5-phospho-alpha-D-ribose 1-diphosphate (PRPP) to the N9 position of the 6-oxopurines guanine and xanthine to form the corresponding ribonucleotides GMP (guanosine 5'-monophosphate) and XMP (xanthosine 5'-monophosphate), with the release of PPi. To a lesser extent, also acts on hypoxanthine. This Brucella canis (strain ATCC 23365 / NCTC 10854 / RM-666) protein is Xanthine-guanine phosphoribosyltransferase.